A 242-amino-acid chain; its full sequence is Large ribosomal subunit protein uL1 (242 aa).

Belongs to the universal ribosomal protein uL1 family. Part of the 50S ribosomal subunit.

Functionally, binds directly to 23S rRNA. The L1 stalk is quite mobile in the ribosome, and is involved in E site tRNA release. Its function is as follows. Protein L1 is also a translational repressor protein, it controls the translation of the L11 operon by binding to its mRNA. In Kitasatospora aureofaciens (Streptomyces aureofaciens), this protein is Large ribosomal subunit protein uL1.